The primary structure comprises 207 residues: Large ribosomal subunit protein bL25 (207 aa).

This sequence belongs to the bacterial ribosomal protein bL25 family. CTC subfamily. Part of the 50S ribosomal subunit; part of the 5S rRNA/L5/L18/L25 subcomplex. Contacts the 5S rRNA. Binds to the 5S rRNA independently of L5 and L18.

Its function is as follows. This is one of the proteins that binds to the 5S RNA in the ribosome where it forms part of the central protuberance. The polypeptide is Large ribosomal subunit protein bL25 (Azorhizobium caulinodans (strain ATCC 43989 / DSM 5975 / JCM 20966 / LMG 6465 / NBRC 14845 / NCIMB 13405 / ORS 571)).